We begin with the raw amino-acid sequence, 864 residues long: DNA mismatch repair protein MutS (864 aa).

613 to 620 (GPNMGGKS) lines the ATP pocket.

Belongs to the DNA mismatch repair MutS family.

Its function is as follows. This protein is involved in the repair of mismatches in DNA. It is possible that it carries out the mismatch recognition step. This protein has a weak ATPase activity. The sequence is that of DNA mismatch repair protein MutS from Actinobacillus pleuropneumoniae serotype 3 (strain JL03).